Consider the following 86-residue polypeptide: Small ribosomal subunit protein uS17 (86 aa).

Belongs to the universal ribosomal protein uS17 family. Part of the 30S ribosomal subunit.

Its function is as follows. One of the primary rRNA binding proteins, it binds specifically to the 5'-end of 16S ribosomal RNA. The chain is Small ribosomal subunit protein uS17 from Caldicellulosiruptor saccharolyticus (strain ATCC 43494 / DSM 8903 / Tp8T 6331).